Consider the following 142-residue polypeptide: Lipoprotein MlpI (142 aa).

Positions 1–17 (MKIINILFCLFLLMLNS) are cleaved as a signal peptide. Cys18 is lipidated: N-palmitoyl cysteine. Cys18 is lipidated: S-diacylglycerol cysteine. A disordered region spans residues 22 to 54 (DTNTSQTKSRQKRDLTQKEATQEKPKSKEDLLR). The segment covering 33–54 (KRDLTQKEATQEKPKSKEDLLR) has biased composition (basic and acidic residues).

It belongs to the Multicopy lipoprotein (Mlp) family.

It localises to the cell outer membrane. An outer membrane protein that may participate in pathogenesis. Some human Lyme disease patients have antibodies against this protein. The Mlp proteins probably undergo intragenic recombination, generating new alleles. The protein is Lipoprotein MlpI of Borreliella burgdorferi (strain ATCC 35210 / DSM 4680 / CIP 102532 / B31) (Borrelia burgdorferi).